The following is a 339-amino-acid chain: Anthranilate phosphoribosyltransferase (339 aa).

5-phospho-alpha-D-ribose 1-diphosphate is bound by residues glycine 79, 82 to 83 (GD), serine 87, 89 to 92 (NIST), 107 to 115 (KHGNRSISS), and serine 119. An anthranilate-binding site is contributed by glycine 79. Mg(2+) is bound at residue serine 91. Asparagine 110 is a binding site for anthranilate. Arginine 165 is an anthranilate binding site. Residues aspartate 224 and glutamate 225 each contribute to the Mg(2+) site.

The protein belongs to the anthranilate phosphoribosyltransferase family. In terms of assembly, homodimer. Mg(2+) serves as cofactor.

It carries out the reaction N-(5-phospho-beta-D-ribosyl)anthranilate + diphosphate = 5-phospho-alpha-D-ribose 1-diphosphate + anthranilate. Its pathway is amino-acid biosynthesis; L-tryptophan biosynthesis; L-tryptophan from chorismate: step 2/5. Catalyzes the transfer of the phosphoribosyl group of 5-phosphorylribose-1-pyrophosphate (PRPP) to anthranilate to yield N-(5'-phosphoribosyl)-anthranilate (PRA). The sequence is that of Anthranilate phosphoribosyltransferase from Listeria welshimeri serovar 6b (strain ATCC 35897 / DSM 20650 / CCUG 15529 / CIP 8149 / NCTC 11857 / SLCC 5334 / V8).